The sequence spans 685 residues: Stromal interaction molecule 1 (685 aa).

A signal peptide spans M1–S22. The Extracellular segment spans residues L23–D213. Positions S24 to S43 are disordered. Low complexity predominate over residues T32–E41. EF-hand domains follow at residues S64–N97 and T102–A126. D76, D78, N80, D82, and E87 together coordinate Ca(2+). Residues N131 and N171 are each glycosylated (N-linked (GlcNAc...) asparagine). Residues W132–F200 enclose the SAM domain. A helical membrane pass occupies residues F214 to N234. The Cytoplasmic portion of the chain corresponds to R235 to K685. A coiled-coil region spans residues L248–V442. S257 carries the post-translational modification Phosphoserine. An SOAR/CAD region spans residues P344–V442. The segment at D475–E483 is contributes to fast Ca(2+)-dependent inactivation of CRAC channels. Low complexity predominate over residues M490 to V499. Positions M490–R542 are disordered. T504 carries the phosphothreonine modification. S512 is subject to Phosphoserine. Positions D515 to R532 are enriched in basic and acidic residues. At T517 the chain carries Phosphothreonine. A phosphoserine mark is found at S519, S521, S523, S524, S567, S575, S602, S608, S618, S621, and S628. The disordered stretch occupies residues L596–K685. Low complexity predominate over residues S608–S620. Positions T642–P645 match the Microtubule tip localization signal motif. Residues E655–D666 show a composition bias toward acidic residues. Position 660 is a phosphoserine (S660). Position 665 is a phosphothreonine (T665). At S668 the chain carries Phosphoserine. Positions G670–K685 are enriched in basic residues. Residues K672–K685 form a required for generation of inwardly rectifying CRAC currents region.

As to quaternary structure, monomer in the presence of Ca(2+). It oligomerizes in absence of Ca(2+). Forms homooligomers and heterooligomers with STIM2. Interacts with pore-forming subunits of CRAC channels, ORAI1, ORAI2 and ORAI3; this interaction is potentiated upon Ca(2+) store depletion. Interacts (via the transmembrane region and the SOAR/CAD domain) with SPPL3; the interaction promotes the binding of STIM1 to ORAI1. Interacts with ORAI1. Interacts with MAPRE1; probably required for targeting to the growing microtubule plus ends. Interacts with CRACR2A/EFCAB4B; the interaction is direct and takes place in absence of Ca(2+). Forms a complex with CRACR2A/EFCAB4B and ORAI1 at low concentration of Ca(2+), the complex dissociates at elevated Ca(2+) concentrations. Interacts with SARAF, promoting a slow inactivation of STIM1-dependent SOCE activity, possibly by facilitating the deoligomerization of STIM1. Interacts with EFHB; the interaction takes place upon Ca(2+)-store depletion and inhibits the association with SARAF. Interacts with ASPH. Interacts with SLC35G1; intracellular Ca(2+)-dependent. May interact with ATP1A1, ATP2A2, ATP2B1, ATP2B4, KPNB1 and XPO1; through SLC35G1. Interacts with TMEM203. Interacts with STIMATE, promoting STIM1 conformational switch. Interacts with TMEM178A. Interacts with CASQ1 (via C-terminal end and preferentially with the monomeric form); this interaction increases in response to a depletion of intracellular Ca(2+), decreases both STIM1 aggregation and clustering, interaction of STIM1 with ORAI1 and store-operated Ca(2+) entry (SOCE) activity. Interacts with ADCY8. Post-translationally, glycosylation is required for cell surface expression. Phosphorylated predominantly on Ser residues.

Its subcellular location is the cell membrane. It localises to the endoplasmic reticulum membrane. It is found in the sarcoplasmic reticulum. The protein resides in the cytoplasm. The protein localises to the cytoskeleton. Its function is as follows. Acts as a Ca(2+) sensor that gates two major inward rectifying Ca(2+) channels at the plasma membrane: Ca(2+) release-activated Ca(2+) (CRAC) channels and arachidonate-regulated Ca(2+)-selective (ARC) channels. Plays a role in mediating store-operated Ca(2+) entry (SOCE), a Ca(2+) influx following depletion of intracellular Ca(2+) stores. Upon Ca(2+) depletion, translocates from the endoplasmic reticulum to the plasma membrane where it activates CRAC channel pore-forming subunits ORA1, ORA2 and ORAI3 to generate sustained and oscillatory Ca(2+) entry. Involved in enamel formation. The sequence is that of Stromal interaction molecule 1 from Rattus norvegicus (Rat).